We begin with the raw amino-acid sequence, 53 residues long: UPF0391 membrane protein GFO_1615 (53 aa).

Transmembrane regions (helical) follow at residues 4 to 24 (LIVI…GGVA) and 27 to 47 (AADI…ISVL).

Belongs to the UPF0391 family.

The protein localises to the cell membrane. This chain is UPF0391 membrane protein GFO_1615, found in Christiangramia forsetii (strain DSM 17595 / CGMCC 1.15422 / KT0803) (Gramella forsetii).